The following is a 334-amino-acid chain: Glyceraldehyde-3-phosphate dehydrogenase (334 aa).

Residues 10–11, Asp33, Lys77, and Thr119 contribute to the NAD(+) site; that span reads RI. D-glyceraldehyde 3-phosphate-binding positions include 149–151, Thr180, 209–210, and Arg232; these read SCT and TG. The active-site Nucleophile is Cys150. Asn314 provides a ligand contact to NAD(+).

Belongs to the glyceraldehyde-3-phosphate dehydrogenase family. Homotetramer.

Its subcellular location is the cytoplasm. It catalyses the reaction D-glyceraldehyde 3-phosphate + phosphate + NAD(+) = (2R)-3-phospho-glyceroyl phosphate + NADH + H(+). It functions in the pathway carbohydrate degradation; glycolysis; pyruvate from D-glyceraldehyde 3-phosphate: step 1/5. Functionally, catalyzes the oxidative phosphorylation of glyceraldehyde 3-phosphate (G3P) to 1,3-bisphosphoglycerate (BPG) using the cofactor NAD. The first reaction step involves the formation of a hemiacetal intermediate between G3P and a cysteine residue, and this hemiacetal intermediate is then oxidized to a thioester, with concomitant reduction of NAD to NADH. The reduced NADH is then exchanged with the second NAD, and the thioester is attacked by a nucleophilic inorganic phosphate to produce BPG. In Chlamydia trachomatis serovar L2 (strain ATCC VR-902B / DSM 19102 / 434/Bu), this protein is Glyceraldehyde-3-phosphate dehydrogenase (gap).